Reading from the N-terminus, the 362-residue chain is Adenosine deaminase (362 aa).

Residues histidine 19 and histidine 21 each coordinate Zn(2+). The substrate site is built by histidine 21, aspartate 23, and glycine 181. Histidine 208 contacts Zn(2+). The active-site Proton donor is the glutamate 211. A Zn(2+)-binding site is contributed by aspartate 300.

This sequence belongs to the metallo-dependent hydrolases superfamily. Adenosine and AMP deaminases family. Adenosine deaminase subfamily. The cofactor is Zn(2+).

The enzyme catalyses adenosine + H2O + H(+) = inosine + NH4(+). It carries out the reaction 2'-deoxyadenosine + H2O + H(+) = 2'-deoxyinosine + NH4(+). Catalyzes the hydrolytic deamination of adenosine and 2-deoxyadenosine. This Mycobacteroides abscessus (strain ATCC 19977 / DSM 44196 / CCUG 20993 / CIP 104536 / JCM 13569 / NCTC 13031 / TMC 1543 / L948) (Mycobacterium abscessus) protein is Adenosine deaminase.